Here is a 349-residue protein sequence, read N- to C-terminus: Green-sensitive opsin-1 (349 aa).

At 1 to 36 the chain is on the extracellular side; sequence MNGTEGKNFYVPMSNRTGLVRSPFEYPQYYLAEPWQ. 2 N-linked (GlcNAc...) asparagine glycosylation sites follow: N2 and N15. A helical transmembrane segment spans residues 37–61; sequence FKILALYLFFLMSMGLPINGLTLVV. At 62 to 73 the chain is on the cytoplasmic side; sequence TAQHKKLRQPLN. Residues 74–99 form a helical membrane-spanning segment; that stretch reads FILVNLAVAGTIMVCFGFTVTFYTAI. At 100 to 113 the chain is on the extracellular side; it reads NGYFVLGPTGCAVE. A disulfide bridge links C110 with C187. Residues 114 to 133 form a helical membrane-spanning segment; that stretch reads GFMATLGGEVALWSLVVLAI. The Cytoplasmic segment spans residues 134–152; it reads ERYIVVCKPMGSFKFSSSH. A helical transmembrane segment spans residues 153-176; it reads AFAGIAFTWVMALACAAPPLFGWS. At 177 to 202 the chain is on the extracellular side; that stretch reads RYIPEGMQCSCGPDYYTLNPDYNNES. Residues 203–230 traverse the membrane as a helical segment; the sequence is YVIYMFVCHFILPVAVIFFTYGRLVCTV. Residues 231 to 252 are Cytoplasmic-facing; sequence KAAAAQQQDSASTQKAEREVTK. The chain crosses the membrane as a helical span at residues 253–276; it reads MVILMVFGFLIAWTPYATVAAWIF. At 277–284 the chain is on the extracellular side; that stretch reads FNKGADFS. A helical membrane pass occupies residues 285 to 309; the sequence is AKFMAIPAFFSKSSALYNPVIYVLL. The residue at position 296 (K296) is an N6-(retinylidene)lysine. At 310-349 the chain is on the cytoplasmic side; sequence NKQFRNCMLTTIFCGKNPLGDDESSTVSTSKTEVSSVSPA. The segment at 329 to 349 is disordered; it reads GDDESSTVSTSKTEVSSVSPA. Residues 334–349 show a composition bias toward low complexity; sequence STVSTSKTEVSSVSPA.

This sequence belongs to the G-protein coupled receptor 1 family. Opsin subfamily. Post-translationally, phosphorylated on some or all of the serine and threonine residues present in the C-terminal region. The color pigments are found in the cone photoreceptor cells.

The protein resides in the membrane. Functionally, visual pigments are the light-absorbing molecules that mediate vision. They consist of an apoprotein, opsin, covalently linked to cis-retinal. The chain is Green-sensitive opsin-1 from Carassius auratus (Goldfish).